The chain runs to 337 residues: DNA-directed RNA polymerase subunit alpha (337 aa).

The alpha N-terminal domain (alpha-NTD) stretch occupies residues 1 to 226 (MLIAQRPTLT…ELFGLARELN (226 aa)). Positions 243–337 (LAADLALEIE…DTSFAEDEQL (95 aa)) are alpha C-terminal domain (alpha-CTD). The interval 315-337 (FDPSAVVNDFEDDDTSFAEDEQL) is disordered. The segment covering 323 to 337 (DFEDDDTSFAEDEQL) has biased composition (acidic residues).

It belongs to the RNA polymerase alpha chain family. Homodimer. The RNAP catalytic core consists of 2 alpha, 1 beta, 1 beta' and 1 omega subunit. When a sigma factor is associated with the core the holoenzyme is formed, which can initiate transcription.

It catalyses the reaction RNA(n) + a ribonucleoside 5'-triphosphate = RNA(n+1) + diphosphate. Functionally, DNA-dependent RNA polymerase catalyzes the transcription of DNA into RNA using the four ribonucleoside triphosphates as substrates. This is DNA-directed RNA polymerase subunit alpha from Kineococcus radiotolerans (strain ATCC BAA-149 / DSM 14245 / SRS30216).